The sequence spans 103 residues: MSNKFGVITNDIQPIGTNNKNVENIKNRQDGLDFIKTLKDSIQDVNTEQQTSEKALADIASGQVKDLHQAAIAINRAENSMKVMLEVRNKAINAYKEILRTQI.

It belongs to the FliE family.

The protein localises to the bacterial flagellum basal body. The sequence is that of Flagellar hook-basal body complex protein FliE from Helicobacter hepaticus (strain ATCC 51449 / 3B1).